The chain runs to 76 residues: Small ribosomal subunit protein bS18 (76 aa).

This sequence belongs to the bacterial ribosomal protein bS18 family. As to quaternary structure, part of the 30S ribosomal subunit. Forms a tight heterodimer with protein bS6.

Its function is as follows. Binds as a heterodimer with protein bS6 to the central domain of the 16S rRNA, where it helps stabilize the platform of the 30S subunit. The polypeptide is Small ribosomal subunit protein bS18 (Oceanobacillus iheyensis (strain DSM 14371 / CIP 107618 / JCM 11309 / KCTC 3954 / HTE831)).